The primary structure comprises 294 residues: Probable 2-(5''-triphosphoribosyl)-3'-dephosphocoenzyme-A synthase (294 aa).

This sequence belongs to the CitG/MdcB family.

It catalyses the reaction 3'-dephospho-CoA + ATP = 2'-(5''-triphospho-alpha-D-ribosyl)-3'-dephospho-CoA + adenine. In Streptococcus pyogenes serotype M18 (strain MGAS8232), this protein is Probable 2-(5''-triphosphoribosyl)-3'-dephosphocoenzyme-A synthase.